Here is a 131-residue protein sequence, read N- to C-terminus: Tegument protein ORF52 (131 aa).

Positions 103-131 (SDGGTAKPPPGANNRRRRGASTTRAGVDD) are disordered. Residues 122 to 131 (ASTTRAGVDD) are compositionally biased toward low complexity. A Phosphoserine; by host modification is found at S123.

This sequence belongs to the herpesviridae BLRF2 family. Homooligomer; homooligomerizes and binds double-stranded DNA (dsDNA) cooperatively. Interacts with host CGAS. Interacts with PQBP1.

It is found in the host cytoplasm. Its subcellular location is the virion tegument. Plays a role in the inhibition of host innate immune system by targeting the CGAS enzymatic activity which is the principal cytosolic DNA sensor that detects invading viral DNA. Acts by inhibiting CGAS-DNA phase separation: directly binds double-stranded DNA (dsDNA) in a length dependent but sequence independent manner and is able to form DNA-induced phase separation in infected cells. DNA phase separation of ORF52 mediates disruption of liquid-like droplets in which CGAS is activated, thereby preventing CGAS activity. Targets also the HDP-RNP complex composed of DNA-PK subunits and paraspeckle proteins. This complex is a key nuclear regulator of DNA-mediated activation of innate immune response through the cGAS-STING pathway. In Homo sapiens (Human), this protein is Tegument protein ORF52.